The chain runs to 252 residues: Chitooligosaccharide deacetylase (252 aa).

Mg(2+) contacts are provided by histidine 61 and histidine 125.

This sequence belongs to the YdjC deacetylase family. ChbG subfamily. As to quaternary structure, homodimer. Mg(2+) is required as a cofactor.

It localises to the cytoplasm. The catalysed reaction is N,N'-diacetylchitobiose + H2O = N-acetyl-beta-D-glucosaminyl-(1-&gt;4)-D-glucosamine + acetate. It catalyses the reaction diacetylchitobiose-6'-phosphate + H2O = N'-monoacetylchitobiose-6'-phosphate + acetate. Its pathway is glycan degradation; chitin degradation. Functionally, involved in the degradation of chitin. ChbG is essential for growth on the acetylated chitooligosaccharides chitobiose and chitotriose but is dispensable for growth on cellobiose and chitosan dimer, the deacetylated form of chitobiose. Deacetylation of chitobiose-6-P and chitotriose-6-P is necessary for both the activation of the chb promoter by the regulatory protein ChbR and the hydrolysis of phosphorylated beta-glucosides by the phospho-beta-glucosidase ChbF. Catalyzes the removal of only one acetyl group from chitobiose-6-P to yield monoacetylchitobiose-6-P, the inducer of ChbR and the substrate of ChbF. The protein is Chitooligosaccharide deacetylase of Escherichia coli O6:H1 (strain CFT073 / ATCC 700928 / UPEC).